Here is a 222-residue protein sequence, read N- to C-terminus: Peptide methionine sulfoxide reductase MsrA (222 aa).

The active site involves cysteine 60.

This sequence belongs to the MsrA Met sulfoxide reductase family.

The catalysed reaction is L-methionyl-[protein] + [thioredoxin]-disulfide + H2O = L-methionyl-(S)-S-oxide-[protein] + [thioredoxin]-dithiol. The enzyme catalyses [thioredoxin]-disulfide + L-methionine + H2O = L-methionine (S)-S-oxide + [thioredoxin]-dithiol. Its function is as follows. Has an important function as a repair enzyme for proteins that have been inactivated by oxidation. Catalyzes the reversible oxidation-reduction of methionine sulfoxide in proteins to methionine. This chain is Peptide methionine sulfoxide reductase MsrA, found in Pseudomonas putida (strain ATCC 47054 / DSM 6125 / CFBP 8728 / NCIMB 11950 / KT2440).